A 491-amino-acid chain; its full sequence is Probable cytosol aminopeptidase (491 aa).

Mn(2+) contacts are provided by lysine 264 and aspartate 269. Lysine 276 is an active-site residue. The Mn(2+) site is built by aspartate 287, aspartate 346, and glutamate 348. The active site involves arginine 350.

Belongs to the peptidase M17 family. It depends on Mn(2+) as a cofactor.

It is found in the cytoplasm. The catalysed reaction is Release of an N-terminal amino acid, Xaa-|-Yaa-, in which Xaa is preferably Leu, but may be other amino acids including Pro although not Arg or Lys, and Yaa may be Pro. Amino acid amides and methyl esters are also readily hydrolyzed, but rates on arylamides are exceedingly low.. It catalyses the reaction Release of an N-terminal amino acid, preferentially leucine, but not glutamic or aspartic acids.. Presumably involved in the processing and regular turnover of intracellular proteins. Catalyzes the removal of unsubstituted N-terminal amino acids from various peptides. The chain is Probable cytosol aminopeptidase from Xylella fastidiosa (strain M12).